The primary structure comprises 579 residues: Peptidyl-prolyl cis-trans isomerase-like 2 (579 aa).

The region spanning 42–115 (RRLPFNFCSL…GEYVDPVTYK (74 aa)) is the U-box domain. The interval 227 to 261 (AERAQRAESGAASKGLTKPGMSATAASQKTVSHQA) is disordered. The span at 250 to 259 (TAASQKTVSH) shows a compositional bias: polar residues. Residues 311 to 470 (QKGYARISTT…PDIRIKDVTI (160 aa)) form the PPIase cyclophilin-type domain. The disordered stretch occupies residues 555 to 579 (EGPEPEPAKKKFKGGGGFGDFSSWD).

This sequence belongs to the cyclophilin-type PPIase family. PPIL2 subfamily.

The protein resides in the nucleus. It catalyses the reaction [protein]-peptidylproline (omega=180) = [protein]-peptidylproline (omega=0). The catalysed reaction is S-ubiquitinyl-[E2 ubiquitin-conjugating enzyme]-L-cysteine + [acceptor protein]-L-lysine = [E2 ubiquitin-conjugating enzyme]-L-cysteine + N(6)-ubiquitinyl-[acceptor protein]-L-lysine.. Its pathway is protein modification; protein ubiquitination. Its function is as follows. May catalyze the cis-trans isomerization of proline imidic peptide bonds in oligopeptides thereby assisting the folding of proteins. May also function as a chaperone, playing a role in intracellular transport of proteins. May also have a protein ubiquitin ligase activity acting as an E3 ubiquitin protein ligase or as a ubiquitin-ubiquitin ligase promoting elongation of ubiquitin chains on proteins. This Aspergillus fumigatus (strain ATCC MYA-4609 / CBS 101355 / FGSC A1100 / Af293) (Neosartorya fumigata) protein is Peptidyl-prolyl cis-trans isomerase-like 2 (cyp8).